A 296-amino-acid chain; its full sequence is Protein FAM221A (296 aa).

Residues 235 to 263 (MQPPSTSSPQPLAVGPSTQISSLRKPEED) form a disordered region. Over residues 237–256 (PPSTSSPQPLAVGPSTQISS) the composition is skewed to polar residues.

It belongs to the FAM221 family.

This is Protein FAM221A (Fam221a) from Rattus norvegicus (Rat).